Consider the following 239-residue polypeptide: Ribonuclease 3 (239 aa).

The RNase III domain maps to R12–G137. Position 50 (E50) interacts with Mg(2+). D54 is a catalytic residue. Residues D123 and E126 each contribute to the Mg(2+) site. E126 is an active-site residue. The DRBM domain maps to D162–V231.

Belongs to the ribonuclease III family. In terms of assembly, homodimer. Mg(2+) is required as a cofactor.

It localises to the cytoplasm. The enzyme catalyses Endonucleolytic cleavage to 5'-phosphomonoester.. Digests double-stranded RNA. Involved in the processing of primary rRNA transcript to yield the immediate precursors to the large and small rRNAs (23S and 16S). Processes some mRNAs, and tRNAs when they are encoded in the rRNA operon. Processes pre-crRNA and tracrRNA of type II CRISPR loci if present in the organism. In Sinorhizobium fredii (strain NBRC 101917 / NGR234), this protein is Ribonuclease 3.